The following is a 299-amino-acid chain: Light-independent protochlorophyllide reductase iron-sulfur ATP-binding protein (299 aa).

Residues 1–23 form a disordered region; that stretch reads MSPLDRTPPSLRGQDGEGSVQVH. Residues 43-48 and K72 each bind ATP; that span reads GIGKST. S47 serves as a coordination point for Mg(2+). Residues C128 and C162 each contribute to the [4Fe-4S] cluster site. Residues 213–214 and 237–239 each bind ATP; these read NR and PDL.

This sequence belongs to the NifH/BchL/ChlL family. Homodimer. Protochlorophyllide reductase is composed of three subunits; BchL, BchN and BchB. [4Fe-4S] cluster is required as a cofactor.

It carries out the reaction chlorophyllide a + oxidized 2[4Fe-4S]-[ferredoxin] + 2 ADP + 2 phosphate = protochlorophyllide a + reduced 2[4Fe-4S]-[ferredoxin] + 2 ATP + 2 H2O. The protein operates within porphyrin-containing compound metabolism; bacteriochlorophyll biosynthesis (light-independent). Its function is as follows. Component of the dark-operative protochlorophyllide reductase (DPOR) that uses Mg-ATP and reduced ferredoxin to reduce ring D of protochlorophyllide (Pchlide) to form chlorophyllide a (Chlide). This reaction is light-independent. The L component serves as a unique electron donor to the NB-component of the complex, and binds Mg-ATP. In Roseobacter denitrificans (strain ATCC 33942 / OCh 114) (Erythrobacter sp. (strain OCh 114)), this protein is Light-independent protochlorophyllide reductase iron-sulfur ATP-binding protein.